The chain runs to 232 residues: Ubiquinone biosynthesis O-methyltransferase (232 aa).

S-adenosyl-L-methionine contacts are provided by Arg-36, Gly-55, Asp-76, and Leu-120.

Belongs to the methyltransferase superfamily. UbiG/COQ3 family.

The catalysed reaction is a 3-demethylubiquinol + S-adenosyl-L-methionine = a ubiquinol + S-adenosyl-L-homocysteine + H(+). The enzyme catalyses a 3-(all-trans-polyprenyl)benzene-1,2-diol + S-adenosyl-L-methionine = a 2-methoxy-6-(all-trans-polyprenyl)phenol + S-adenosyl-L-homocysteine + H(+). It functions in the pathway cofactor biosynthesis; ubiquinone biosynthesis. Functionally, O-methyltransferase that catalyzes the 2 O-methylation steps in the ubiquinone biosynthetic pathway. This chain is Ubiquinone biosynthesis O-methyltransferase, found in Pseudomonas putida (strain ATCC 700007 / DSM 6899 / JCM 31910 / BCRC 17059 / LMG 24140 / F1).